The following is a 257-amino-acid chain: Ribosomal RNA small subunit methyltransferase J (257 aa).

Residues 107-108 (RD), 123-124 (ER), and Asp177 each bind S-adenosyl-L-methionine.

This sequence belongs to the methyltransferase superfamily. RsmJ family.

The protein resides in the cytoplasm. It carries out the reaction guanosine(1516) in 16S rRNA + S-adenosyl-L-methionine = N(2)-methylguanosine(1516) in 16S rRNA + S-adenosyl-L-homocysteine + H(+). Its function is as follows. Specifically methylates the guanosine in position 1516 of 16S rRNA. The protein is Ribosomal RNA small subunit methyltransferase J of Haemophilus influenzae (strain PittEE).